The following is a 455-amino-acid chain: MRNCCQEHRLSAGHLEPEISSSCASDVKSSPDMDSVSSQDSLYLPNSVGASLEDQDLWAQFHQEGTEMIITKSGRRMFPQCKIRLFGLHPYAKYMLLVDFVPLDNFRYKWNKNQWEAAGKAEPHPPCRTYVHPDSPAPGAHWMKDAICFQKLKLTNNTLDQQGHIILHSMHRYKPRFHVVQSDDMYNSPWGLVQVFSFPETEFTAVTAYQNEKITKLKINHNPFAKGFREQERSHKRDDVLKTLQQSPSKRQKRKKWEDSPEAEISDFPKATRVKEESIMDPAGVYQNWVSDHEANQGLTPHSPESDGANQEQQVPSSSSNFYNRNPYRRSSQHLSSPYDLGEPSSRRLTPDVATVPDSDPDSLAVLHVIPTQNSTQDRTCGVNFSMEAQMKQPLRGAMYSPYGAEQWMVPAQGQYRPMGYTAYPTDLSTQGAVAHPHSGMSDWSQYSLFPYSCW.

Residues 57–230 (LWAQFHQEGT…HNPFAKGFRE (174 aa)) constitute a DNA-binding region (T-box). Residues 229–241 (REQERSHKRDDVL) are compositionally biased toward basic and acidic residues. 2 disordered regions span residues 229-276 (REQE…RVKE) and 295-360 (ANQG…PDSD). Polar residues predominate over residues 308-326 (GANQEQQVPSSSSNFYNRN).

As to quaternary structure, forms a repression complex on the promoters of the nodal/nr1 and siamois genes with the maternal factors tcf7l1/tcf3 and pouf5.1/oct-25. Interacts (via C-terminus) with tcf7l1/tcf3 (via N-terminus). Also interacts with the other POU-domain transcription factors pou5f1.2/oct-91 and pou5f1.3/oct-60. In terms of tissue distribution, vegetally localized in oocytes and expressed in the presumptive endoderm and mesoderm at early gastrula stage. Expression is down-regulated in the endoderm by the end of gastrulation but maintained in the lateral and ventral mesoderm of the blastopore lip.

The protein resides in the nucleus. Functionally, transcription factor required for both mesoderm and endoderm formation in the embryo; signaling determinants and concentration levels may determine which germ layer is formed. Acts together with beta-catenin to activate genes that are responsible for mesoderm induction including wnt-8, eomes t/bra, siamois, mix1 and sox17. Directly binds to promoter DNA. Patterns the mesoderm along the dorsoventral and posterior axis. Activates siamois gene transcription when alone or in combination with beta-catenin, but inhibits siamois transcription in combination with pou5f1.1/oct-25. The chain is T-box protein VegT from Xenopus tropicalis (Western clawed frog).